We begin with the raw amino-acid sequence, 190 residues long: Xanthine phosphoribosyltransferase (190 aa).

Leu-20 and Asn-27 together coordinate xanthine. Ala-128–Ala-132 serves as a coordination point for 5-phospho-alpha-D-ribose 1-diphosphate. Lys-156 serves as a coordination point for xanthine.

The protein belongs to the purine/pyrimidine phosphoribosyltransferase family. Xpt subfamily. In terms of assembly, homodimer.

It localises to the cytoplasm. It catalyses the reaction XMP + diphosphate = xanthine + 5-phospho-alpha-D-ribose 1-diphosphate. It participates in purine metabolism; XMP biosynthesis via salvage pathway; XMP from xanthine: step 1/1. Converts the preformed base xanthine, a product of nucleic acid breakdown, to xanthosine 5'-monophosphate (XMP), so it can be reused for RNA or DNA synthesis. The sequence is that of Xanthine phosphoribosyltransferase from Clostridium novyi (strain NT).